Reading from the N-terminus, the 676-residue chain is Urocanate hydratase (676 aa).

A disordered region spans residues 15–35 (PLPENRGRQAGVPHAPVRTPS). NAD(+) is bound by residues 126–127 (GG), Gln-204, 251–253 (GMS), Glu-271, 317–318 (NV), 343–347 (QTSCH), 354–355 (YY), Tyr-403, and Gly-594.

Belongs to the urocanase family. The cofactor is NAD(+).

It catalyses the reaction 4-imidazolone-5-propanoate = trans-urocanate + H2O. Its pathway is amino-acid degradation; L-histidine degradation into L-glutamate; N-formimidoyl-L-glutamate from L-histidine: step 2/3. The chain is Urocanate hydratase (UROC1) from Homo sapiens (Human).